Consider the following 1175-residue polypeptide: Beta-agarase AgaO (1175 aa).

The N-terminal stretch at 1–29 is a signal peptide; the sequence is MRLSKSQGILPLAHAVLAAAIAYSTAATA. The CBM6 1 domain occupies 32-164; that stretch reads YRLEAEDFTN…QWNLDKMELA (133 aa). The disordered stretch occupies residues 169 to 208; it reads SSSSSGGGSTSSSSSGGSSSSSGSGSSSSGGSPEEGGHVS. Over residues 178–200 the composition is skewed to low complexity; the sequence is TSSSSSGGSSSSSGSGSSSSGGS. The CBM6 2 domain occupies 211 to 339; that stretch reads FKLEAESAHH…QFNIDYVIFE (129 aa). The disordered stretch occupies residues 355-481; the sequence is IADVNDSCPG…ESGCSPSQVA (127 aa). The segment covering 382 to 393 has biased composition (basic and acidic residues); sequence DTDKDGIADNRD. The span at 471–481 shows a compositional bias: polar residues; it reads NESGCSPSQVA. The active-site Proton donor is the Glu661. Glu832 acts as the Nucleophile in catalysis.

It belongs to the glycosyl hydrolase 86 family.

It carries out the reaction Hydrolysis of (1-&gt;4)-beta-D-galactosidic linkages in agarose, giving the tetramer as the predominant product.. With respect to regulation, activity and stability are strongly enhanced by CaCl(2). Activity is not affected by sulfhydryl inhibitors such as iodoacetoamide and p-chloromercuribenzoate or by thiol reagents such as dithiothreitol and 2-mercaptoethanol. Strongly inhibited by N-bromosuccinimide and sodium dodecyl sulfate. Its function is as follows. Endo-type beta-agarase, which degrades agarose and agarose oligosaccharides more polymerized than hexamers to yield neoagarohexaose (NA6) as the main product, with lesser amounts of neoagarotetraose (NA4) and neoagarobiose (NA2). The protein is Beta-agarase AgaO of Microbulbifer thermotolerans.